An 84-amino-acid polypeptide reads, in one-letter code: Large ribosomal subunit protein bL27 (84 aa).

The interval 1 to 22 (MAKTKAGGSTKNGRDSAGRRLG) is disordered.

This sequence belongs to the bacterial ribosomal protein bL27 family.

This is Large ribosomal subunit protein bL27 from Mesomycoplasma hyopneumoniae (strain 232) (Mycoplasma hyopneumoniae).